Consider the following 348-residue polypeptide: Alternative squalene epoxidase (348 aa).

A compositionally biased stretch (basic and acidic residues) spans 1–10; sequence MLVDRVENNE. A disordered region spans residues 1–26; that stretch reads MLVDRVENNEKQQQQMASSSDAMSDS. The segment covering 12–26 has biased composition (low complexity); it reads QQQQMASSSDAMSDS. 3 consecutive transmembrane segments (helical) span residues 55 to 75, 105 to 125, and 153 to 173; these read AIAW…LLLS, LGLV…WIFF, and GLLT…YLAI. The region spanning 197–332 is the Fatty acid hydroxylase domain; sequence FMCLVLQDGI…FMWFDQLGGT (136 aa). The Histidine box-1 signature appears at 211 to 215; that stretch reads HVLEH. The Histidine box-2 motif lies at 226-230; the sequence is HKPHH. 2 consecutive transmembrane segments (helical) span residues 243-263 and 277-297; these read GSLM…ANLV and SYAC…DGIF. A Histidine box-3 motif is present at residues 308–312; that stretch reads HHVHH.

It belongs to the sterol desaturase family. In terms of assembly, interacts with cytochrome b5/PHATRDRAFT_30770. The cofactor is Fe cation.

It is found in the endoplasmic reticulum membrane. It catalyses the reaction squalene + 2 Fe(II)-[cytochrome b5] + O2 + 2 H(+) = (S)-2,3-epoxysqualene + 2 Fe(III)-[cytochrome b5] + H2O. The protein operates within terpene metabolism; lanosterol biosynthesis; lanosterol from farnesyl diphosphate. Its activity is regulated as follows. The activity of this enzyme is not inhibited by terbinafine, an established inhibitor of the conventional flavoprotein squalene epoxidase. Its function is as follows. Catalyzes the stereospecific epoxidation of squalene at the terminal double bond to form (S)-2,3-epoxysqualene, the first oxygenation step in sterol biosynthesis. This is Alternative squalene epoxidase from Phaeodactylum tricornutum (strain CCAP 1055/1).